A 674-amino-acid polypeptide reads, in one-letter code: DNA ligase (674 aa).

Residues 34 to 38, 82 to 83, and E107 each bind NAD(+); these read DADFD and SL. Catalysis depends on K109, which acts as the N6-AMP-lysine intermediate. R130, E170, K286, and K310 together coordinate NAD(+). Residues C404, C407, C423, and C429 each contribute to the Zn(2+) site. Residues 593-674 enclose the BRCT domain; the sequence is KPAQTLEGIT…FTRLLETGEA (82 aa).

It belongs to the NAD-dependent DNA ligase family. LigA subfamily. Mg(2+) is required as a cofactor. The cofactor is Mn(2+).

It carries out the reaction NAD(+) + (deoxyribonucleotide)n-3'-hydroxyl + 5'-phospho-(deoxyribonucleotide)m = (deoxyribonucleotide)n+m + AMP + beta-nicotinamide D-nucleotide.. In terms of biological role, DNA ligase that catalyzes the formation of phosphodiester linkages between 5'-phosphoryl and 3'-hydroxyl groups in double-stranded DNA using NAD as a coenzyme and as the energy source for the reaction. It is essential for DNA replication and repair of damaged DNA. This chain is DNA ligase, found in Corynebacterium aurimucosum (strain ATCC 700975 / DSM 44827 / CIP 107346 / CN-1) (Corynebacterium nigricans).